The chain runs to 297 residues: Transmembrane protein 169 (297 aa).

Residues 1–88 (MEESAPVESQ…EGEDFLDYPG (88 aa)) are disordered. The Extracellular segment spans residues 1–159 (MEESAPVESQ…CQVGADQGPH (159 aa)). Residues 22–31 (RRAVAAVLAL) show a composition bias toward low complexity. Acidic residues-rich tracts occupy residues 61 to 70 (KTDEEPEESE) and 78 to 88 (EEGEDFLDYPG). Residues 160 to 180 (VVLWTLVCLPVVFVLSFVVSF) traverse the membrane as a helical segment. Over 181–210 (YYGTITWYNIFLVYNEERTFWHKISCCPCL) the chain is Cytoplasmic. Residues 211 to 231 (ILFYPVLIMTMASSLGLYAAV) traverse the membrane as a helical segment. Over 232-297 (AQLSWSWAAW…PIQEVETSTV (66 aa)) the chain is Extracellular.

The protein resides in the membrane. The sequence is that of Transmembrane protein 169 (Tmem169) from Mus musculus (Mouse).